A 171-amino-acid chain; its full sequence is 3-hydroxydecanoyl-[acyl-carrier-protein] dehydratase (171 aa).

Residue His-70 is part of the active site.

It belongs to the thioester dehydratase family. FabA subfamily. As to quaternary structure, homodimer.

The protein localises to the cytoplasm. It catalyses the reaction a (3R)-hydroxyacyl-[ACP] = a (2E)-enoyl-[ACP] + H2O. The enzyme catalyses (3R)-hydroxydecanoyl-[ACP] = (2E)-decenoyl-[ACP] + H2O. The catalysed reaction is (2E)-decenoyl-[ACP] = (3Z)-decenoyl-[ACP]. It participates in lipid metabolism; fatty acid biosynthesis. In terms of biological role, necessary for the introduction of cis unsaturation into fatty acids. Catalyzes the dehydration of (3R)-3-hydroxydecanoyl-ACP to E-(2)-decenoyl-ACP and then its isomerization to Z-(3)-decenoyl-ACP. Can catalyze the dehydratase reaction for beta-hydroxyacyl-ACPs with saturated chain lengths up to 16:0, being most active on intermediate chain length. This chain is 3-hydroxydecanoyl-[acyl-carrier-protein] dehydratase, found in Vibrio campbellii (strain ATCC BAA-1116).